A 481-amino-acid polypeptide reads, in one-letter code: Phosphatidylinositol 4-kinase type 2-beta (481 aa).

Residues 1–11 show a composition bias toward basic and acidic residues; the sequence is MEDPSEPDRLA. The tract at residues 1 to 82 is disordered; the sequence is MEDPSEPDRL…VSRSSSAELD (82 aa). Phosphoserine occurs at positions 12, 17, and 45. Over residues 53–64 the composition is skewed to acidic residues; that stretch reads AGEEGEAGDEEL. The 332-residue stretch at 120–451 folds into the PI3K/PI4K catalytic domain; that stretch reads GIFPERISQG…VQIPCVIVER (332 aa). A G-loop region spans residues 126 to 132; it reads ISQGSSG. S133 and K148 together coordinate ATP. Residues 153–155 form an important for substrate binding region; that stretch reads EPY. Residues 161-174 are important for interaction with membranes; it reads KWTKYVHKVCCPCC. ATP is bound by residues 257–260 and 271–272; these read QLFV and RK. An important for interaction with membranes region spans residues 264-272; sequence KEAEYWLRK. The interval 301 to 309 is catalytic loop; the sequence is RNTDRGNDN. The activation loop stretch occupies residues 342–362; that stretch reads AIDNGLAFPFKHPDEWRAYPF. D344 provides a ligand contact to ATP. Positions 357–366 are important for interaction with membranes; sequence WRAYPFHWAW.

This sequence belongs to the PI3/PI4-kinase family. Type II PI4K subfamily. Widely expressed.

The protein localises to the cytoplasm. It is found in the cytosol. It localises to the golgi apparatus membrane. The protein resides in the endoplasmic reticulum membrane. Its subcellular location is the cell membrane. The protein localises to the early endosome membrane. It carries out the reaction a 1,2-diacyl-sn-glycero-3-phospho-(1D-myo-inositol) + ATP = a 1,2-diacyl-sn-glycero-3-phospho-(1D-myo-inositol 4-phosphate) + ADP + H(+). Inhibited by phenylarsine oxide and adenosine. Activation through membrane association is stimulated by active RAC1. In terms of biological role, together with PI4K2A and the type III PI4Ks (PIK4CA and PIK4CB) it contributes to the overall PI4-kinase activity of the cell. This contribution may be especially significant in plasma membrane, endosomal and Golgi compartments. The phosphorylation of phosphatidylinositol (PI) to PI4P is the first committed step in the generation of phosphatidylinositol 4,5-bisphosphate (PIP2), a precursor of the second messenger inositol 1,4,5-trisphosphate (InsP3). Contributes to the production of InsP3 in stimulated cells and is likely to be involved in the regulation of vesicular trafficking. The sequence is that of Phosphatidylinositol 4-kinase type 2-beta (PI4K2B) from Homo sapiens (Human).